The primary structure comprises 165 residues: uncharacterized protein (165 aa).

Positions 28 to 97 (EASAPSGNPP…QLSQSLEVPT (70 aa)) are disordered. Over residues 34-47 (GNPPPPPPPPPPPI) the composition is skewed to pro residues. Composition is skewed to polar residues over residues 54-66 (KSLN…QLDN) and 73-94 (AQHT…QSLE).

This is an uncharacterized protein from Rickettsia prowazekii (strain Madrid E).